The sequence spans 252 residues: Neurexophilin-3 (252 aa).

Positions 1–22 (MQLTRCCFVFLVQGSLYLVICG) are cleaved as a signal peptide. The segment at 23-75 (QEDGPPGSEDPEHDDHEGQPRPRVPRKRGHISPKSRPLANSTLLGLLAPPGEV) is II. The disordered stretch occupies residues 27–59 (PPGSEDPEHDDHEGQPRPRVPRKRGHISPKSRP). Over residues 45 to 55 (RVPRKRGHISP) the composition is skewed to basic residues. N-linked (GlcNAc...) asparagine glycosylation is found at asparagine 62, asparagine 127, asparagine 137, and asparagine 143. The segment at 76–157 (WGILGQPPNR…LVPPSKAVEF (82 aa)) is III. Residues 158–166 (HQEQQIFIE) are IV (linker domain). Residues 167 to 252 (AKASKIFNCR…HSDTPYYPSG (86 aa)) form a v (Cys-rich) region.

The protein belongs to the neurexophilin family. Post-translationally, may be proteolytically processed at the boundary between the N-terminal non-conserved and the central conserved domain in neuron-like cells. In terms of tissue distribution, brain. Detected in several other tissues.

Its subcellular location is the secreted. Functionally, may be signaling molecules that resemble neuropeptides. Ligand for alpha-neurexins. The polypeptide is Neurexophilin-3 (Nxph3) (Rattus norvegicus (Rat)).